We begin with the raw amino-acid sequence, 643 residues long: Beta-1,3-galactosyltransferase GALT1 (643 aa).

Over 1-6 the chain is Cytoplasmic; sequence MKRFYG. Residues 7 to 23 form a helical; Signal-anchor for type II membrane protein membrane-spanning segment; that stretch reads GLLVVSMCMFLTVYRYV. The Lumenal portion of the chain corresponds to 24–643; it reads DLNTPVEKPY…TKRSLCCREW (620 aa). N-linked (GlcNAc...) asparagine glycosylation is found at Asn45, Asn87, Asn144, Asn162, Asn277, Asn287, and Asn508. Positions 171 to 364 constitute a Galectin domain; sequence LKLQIPCGLT…DFRLISILAS (194 aa).

The protein belongs to the glycosyltransferase 31 family. In terms of assembly, interacts with GMII. It depends on Mn(2+) as a cofactor. As to expression, expressed in stems and siliques.

The protein localises to the golgi apparatus membrane. It functions in the pathway protein modification; protein glycosylation. In terms of biological role, beta-1,3-galactosyltransferase that transfers galactose from UDP-galactose to substrates with a terminal beta-N-acetylglucosamine (beta-GlcNAc) residue. Involved in the biosynthesis of N-glycans containing Lewis a structures (with the combination of FUT13). This is Beta-1,3-galactosyltransferase GALT1 from Arabidopsis thaliana (Mouse-ear cress).